We begin with the raw amino-acid sequence, 253 residues long: Decarboxylase DEC1 (253 aa).

Catalysis depends on Lys-121, which acts as the Schiff-base intermediate with acetoacetate.

This sequence belongs to the ADC family.

It functions in the pathway mycotoxin biosynthesis. Functionally, decarboxylase; part of the Tox1B locus, one of the 2 loci that mediate the biosynthesis of T-toxin, a family of linear polyketides 37 to 45 carbons in length, of which the major component is 41 carbons, and which leads to high virulence to maize. One of the PKSs (PKS1 or PKS2) could synthesize a precursor, used subsequently by the other PKS as starter unit, to add additional carbons. Variability in the length of the final carbon backbone C35-47 could be achieved by varying the number of condensation cycles, or use of different starter or extender units or might be due to decarboxylation of the penultimate product, catalyzed by DEC1. Additional proteins are required for the biosynthesis of T-toxin, including oxidoreductases RED1, RED2, RED3, LAM1 and OXI1, as well as esterase TOX9. This is Decarboxylase DEC1 from Cochliobolus heterostrophus (strain C4 / ATCC 48331 / race T) (Southern corn leaf blight fungus).